The chain runs to 371 residues: Leu/Ile/Val-binding protein homolog 1 (371 aa).

The signal sequence occupies residues 1-23 (MRKTLFSGVALAAVIAFGGSAWA).

This sequence belongs to the leucine-binding protein family.

Its function is as follows. Component of an amino-acid transport system. This Brucella suis biovar 1 (strain 1330) protein is Leu/Ile/Val-binding protein homolog 1.